Reading from the N-terminus, the 247-residue chain is tRNA (guanine-N(1)-)-methyltransferase (247 aa).

Residues G112 and 131 to 136 contribute to the S-adenosyl-L-methionine site; that span reads LGDFVL.

Belongs to the RNA methyltransferase TrmD family. In terms of assembly, homodimer.

It is found in the cytoplasm. The catalysed reaction is guanosine(37) in tRNA + S-adenosyl-L-methionine = N(1)-methylguanosine(37) in tRNA + S-adenosyl-L-homocysteine + H(+). In terms of biological role, specifically methylates guanosine-37 in various tRNAs. The protein is tRNA (guanine-N(1)-)-methyltransferase of Syntrophotalea carbinolica (strain DSM 2380 / NBRC 103641 / GraBd1) (Pelobacter carbinolicus).